Consider the following 408-residue polypeptide: NFATC2-interacting protein (408 aa).

Positions 1-113 are disordered; sequence MAEPVGKRGR…LDPGEAPLVP (113 aa). A compositionally biased stretch (low complexity) spans 24 to 40; it reads QRSPSRGTLDVVSVDLV. Residues S41, S43, S73, S77, S79, S81, and S116 each carry the phosphoserine modification. Glycyl lysine isopeptide (Lys-Gly) (interchain with G-Cter in SUMO2) cross-links involve residues K118 and K120. A disordered region spans residues 141-205; that stretch reads EEEVELADSS…TKSRKHTRAL (65 aa). Basic and acidic residues predominate over residues 169–181; it reads RTKDKEEKKKTEI. 3 positions are modified to phosphoserine: S187, S190, and S193. Positions 196–205 are enriched in basic residues; the sequence is TKSRKHTRAL. Residues 197–220 adopt a coiled-coil conformation; sequence KSRKHTRALKKLSEVNKRLQDLRS. Phosphoserine occurs at positions 209 and 303. Residues T305 and T307 each carry the phosphothreonine modification. Positions 337–408 constitute a Ubiquitin-like domain; that stretch reads LQLRVQGKEK…ESGDLIEVWG (72 aa). S358 and S379 each carry phosphoserine.

In terms of assembly, interacts with NFATC2, TRAF1, TRAF2 and PRMT1. Interacts with UBE2I/UBC9. Methylation at the N-terminus by PRMT1 modulates interaction with the NFAT complex and results in augmented cytokine production.

The protein resides in the nucleus. It is found in the cytoplasm. Its function is as follows. In T-helper 2 (Th2) cells, regulates the magnitude of NFAT-driven transcription of a specific subset of cytokine genes, including IL3, IL4, IL5 and IL13, but not IL2. Recruits PRMT1 to the IL4 promoter; this leads to enhancement of histone H4 'Arg-3'-methylation and facilitates subsequent histone acetylation at the IL4 locus, thus promotes robust cytokine expression. Down-regulates formation of poly-SUMO chains by UBE2I/UBC9. This chain is NFATC2-interacting protein (NFATC2IP), found in Macaca fascicularis (Crab-eating macaque).